The following is a 271-amino-acid chain: S-adenosylmethionine decarboxylase proenzyme (271 aa).

The Schiff-base intermediate with substrate; via pyruvic acid role is filled by serine 121. Residue serine 121 is modified to Pyruvic acid (Ser); by autocatalysis. Histidine 126 serves as the catalytic Proton acceptor; for processing activity. Residue cysteine 149 is the Proton donor; for catalytic activity of the active site.

This sequence belongs to the prokaryotic AdoMetDC family. Type 2 subfamily. In terms of assembly, heterooctamer of four alpha and four beta chains arranged as a tetramer of alpha/beta heterodimers. Pyruvate is required as a cofactor. In terms of processing, is synthesized initially as an inactive proenzyme. Formation of the active enzyme involves a self-maturation process in which the active site pyruvoyl group is generated from an internal serine residue via an autocatalytic post-translational modification. Two non-identical subunits are generated from the proenzyme in this reaction, and the pyruvate is formed at the N-terminus of the alpha chain, which is derived from the carboxyl end of the proenzyme. The post-translation cleavage follows an unusual pathway, termed non-hydrolytic serinolysis, in which the side chain hydroxyl group of the serine supplies its oxygen atom to form the C-terminus of the beta chain, while the remainder of the serine residue undergoes an oxidative deamination to produce ammonia and the pyruvoyl group blocking the N-terminus of the alpha chain.

The enzyme catalyses S-adenosyl-L-methionine + H(+) = S-adenosyl 3-(methylsulfanyl)propylamine + CO2. It functions in the pathway amine and polyamine biosynthesis; S-adenosylmethioninamine biosynthesis; S-adenosylmethioninamine from S-adenosyl-L-methionine: step 1/1. Its function is as follows. Catalyzes the decarboxylation of S-adenosylmethionine to S-adenosylmethioninamine (dcAdoMet), the propylamine donor required for the synthesis of the polyamines spermine and spermidine from the diamine putrescine. This Clostridium beijerinckii (strain ATCC 51743 / NCIMB 8052) (Clostridium acetobutylicum) protein is S-adenosylmethionine decarboxylase proenzyme.